Consider the following 312-residue polypeptide: tRNA-cytidine(32) 2-sulfurtransferase (312 aa).

The short motif at 48–53 (SGGKDS) is the PP-loop motif element. Positions 123, 126, and 214 each coordinate [4Fe-4S] cluster.

This sequence belongs to the TtcA family. Homodimer. Mg(2+) is required as a cofactor. [4Fe-4S] cluster serves as cofactor.

It is found in the cytoplasm. The catalysed reaction is cytidine(32) in tRNA + S-sulfanyl-L-cysteinyl-[cysteine desulfurase] + AH2 + ATP = 2-thiocytidine(32) in tRNA + L-cysteinyl-[cysteine desulfurase] + A + AMP + diphosphate + H(+). It functions in the pathway tRNA modification. Its function is as follows. Catalyzes the ATP-dependent 2-thiolation of cytidine in position 32 of tRNA, to form 2-thiocytidine (s(2)C32). The sulfur atoms are provided by the cysteine/cysteine desulfurase (IscS) system. This Mannheimia succiniciproducens (strain KCTC 0769BP / MBEL55E) protein is tRNA-cytidine(32) 2-sulfurtransferase.